The chain runs to 501 residues: TGF-beta receptor type-1 (501 aa).

An N-terminal signal peptide occupies residues 1–29; the sequence is MEAASAALRRCLLLIVLVAAATLLPGAKA. The Extracellular segment spans residues 30–124; sequence LQCFCHLCTK…QSAGLGPVEL (95 aa). 5 cysteine pairs are disulfide-bonded: cysteine 32–cysteine 50, cysteine 34–cysteine 37, cysteine 44–cysteine 67, cysteine 82–cysteine 94, and cysteine 95–cysteine 100. The N-linked (GlcNAc...) asparagine glycan is linked to asparagine 41. Residues 125-145 traverse the membrane as a helical segment; it reads AAVIAGPVCFVCIALMLMVYI. The Cytoplasmic portion of the chain corresponds to 146–501; it reads CHNRTVIHHR…QLSQQEGIKM (356 aa). At serine 163 the chain carries Phosphoserine. A GS domain is found at 173–202; sequence TTLKDLIYDMTTSGSGSGLPLLVQRTIART. 2 positions are modified to phosphothreonine; by TGFBR2: threonine 183 and threonine 184. Phosphoserine; by TGFBR2 is present on residues serine 185, serine 187, and serine 189. Residues 191–192 carry the FKBP1A-binding motif; it reads LP. The region spanning 203-493 is the Protein kinase domain; sequence IVLQESIGKG…LRIKKTLSQL (291 aa). ATP-binding positions include 209–217 and lysine 230; that span reads IGKGRFGEV. The active-site Proton acceptor is the aspartate 331. Lysine 389 is covalently cross-linked (Glycyl lysine isopeptide (Lys-Gly) (interchain with G-Cter in SUMO)).

It belongs to the protein kinase superfamily. TKL Ser/Thr protein kinase family. TGFB receptor subfamily. As to quaternary structure, homodimer; in the endoplasmic reticulum but also at the cell membrane. Heterohexamer; TGFB1, TGFB2 and TGFB3 homodimeric ligands assemble a functional receptor composed of two TGFBR1 and TGFBR2 heterodimers to form a ligand-receptor heterohexamer. The respective affinity of TGBRB1 and TGFBR2 for the ligands may modulate the kinetics of assembly of the receptor and may explain the different biological activities of TGFB1, TGFB2 and TGFB3. Component of a complex composed of TSC22D1 (via N-terminus), TGFBR1 and TGFBR2; the interaction between TSC22D1 and TGFBR1 is inhibited by SMAD7 and promoted by TGFB1. Interacts with CD109; inhibits TGF-beta receptor activation in keratinocytes. Interacts with RBPMS. Interacts with SMAD2, SMAD3 and ZFYVE9; ZFYVE9 recruits SMAD2 and SMAD3 to the TGF-beta receptor. Interacts with TRAF6 and MAP3K7; induces MAP3K7 activation by TRAF6. Interacts with PARD6A; involved in TGF-beta induced epithelial to mesenchymal transition. Interacts with NEDD4L. Interacts with SMAD7, SMURF1 and SMURF2; SMAD7 recruits NEDD4L, SMURF1 and SMURF2 to the TGF-beta receptor. Interacts with USP15 and VPS39. Interacts (unphosphorylated) with FKBP1A; prevents TGFBR1 phosphorylation by TGFBR2 and stabilizes it in the inactive conformation. Interacts with SDCBP (via C-terminus). Interacts with CAV1 and this interaction is impaired in the presence of SDCBP. Interacts with APPL1; interaction is TGF beta dependent; mediates trafficking of the TGFBR1 from the endosomes to the nucleus via microtubules in a TRAF6-dependent manner. Interacts with GPR50; this interaction promotes the constitutive activation of SMAD signaling pathway. The cofactor is Mg(2+). It depends on Mn(2+) as a cofactor. Post-translationally, phosphorylated at basal levels in the absence of ligand. Activated upon phosphorylation by TGFBR2, mainly in the GS domain. Phosphorylation in the GS domain abrogates FKBP1A-binding. N-Glycosylated. In terms of processing, ubiquitinated; undergoes ubiquitination catalyzed by several E3 ubiquitin ligases including SMURF1, SMURF2 and NEDD4L2. Results in the proteasomal and/or lysosomal degradation of the receptor thereby negatively regulating its activity. Deubiquitinated by USP15, leading to stabilization of the protein and enhanced TGF-beta signal. Its ubiquitination and proteasome-mediated degradation is negatively regulated by SDCBP. In terms of tissue distribution, urogenital ridge, testis, ovary, brain and lungs.

It is found in the cell membrane. It localises to the cell junction. The protein resides in the tight junction. Its subcellular location is the membrane raft. The protein localises to the cell surface. It carries out the reaction L-threonyl-[receptor-protein] + ATP = O-phospho-L-threonyl-[receptor-protein] + ADP + H(+). It catalyses the reaction L-seryl-[receptor-protein] + ATP = O-phospho-L-seryl-[receptor-protein] + ADP + H(+). With respect to regulation, kept in an inactive conformation by FKBP1A preventing receptor activation in absence of ligand. CD109 is another inhibitor of the receptor. Transmembrane serine/threonine kinase forming with the TGF-beta type II serine/threonine kinase receptor, TGFBR2, the non-promiscuous receptor for the TGF-beta cytokines TGFB1, TGFB2 and TGFB3. Transduces the TGFB1, TGFB2 and TGFB3 signal from the cell surface to the cytoplasm and is thus regulating a plethora of physiological and pathological processes including cell cycle arrest in epithelial and hematopoietic cells, control of mesenchymal cell proliferation and differentiation, wound healing, extracellular matrix production, immunosuppression and carcinogenesis. The formation of the receptor complex composed of 2 TGFBR1 and 2 TGFBR2 molecules symmetrically bound to the cytokine dimer results in the phosphorylation and the activation of TGFBR1 by the constitutively active TGFBR2. Activated TGFBR1 phosphorylates SMAD2 which dissociates from the receptor and interacts with SMAD4. The SMAD2-SMAD4 complex is subsequently translocated to the nucleus where it modulates the transcription of the TGF-beta-regulated genes. This constitutes the canonical SMAD-dependent TGF-beta signaling cascade. Also involved in non-canonical, SMAD-independent TGF-beta signaling pathways. For instance, TGFBR1 induces TRAF6 autoubiquitination which in turn results in MAP3K7 ubiquitination and activation to trigger apoptosis. Also regulates epithelial to mesenchymal transition through a SMAD-independent signaling pathway through PARD6A phosphorylation and activation. This chain is TGF-beta receptor type-1 (Tgfbr1), found in Rattus norvegicus (Rat).